We begin with the raw amino-acid sequence, 331 residues long: Large ribosomal subunit protein uL3 (331 aa).

This sequence belongs to the universal ribosomal protein uL3 family. Part of the 50S ribosomal subunit. Forms a cluster with proteins L14 and L24e.

One of the primary rRNA binding proteins, it binds directly near the 3'-end of the 23S rRNA, where it nucleates assembly of the 50S subunit. This is Large ribosomal subunit protein uL3 from Archaeoglobus fulgidus (strain ATCC 49558 / DSM 4304 / JCM 9628 / NBRC 100126 / VC-16).